We begin with the raw amino-acid sequence, 494 residues long: Glutamate--tRNA ligase (494 aa).

The 'HIGH' region signature appears at 10–20; the sequence is PSPTGDPHVGT. The Zn(2+) site is built by cysteine 107, cysteine 109, cysteine 134, and histidine 136. Positions 251–255 match the 'KMSKS' region motif; that stretch reads KLSKR. Lysine 254 is an ATP binding site.

The protein belongs to the class-I aminoacyl-tRNA synthetase family. Glutamate--tRNA ligase type 1 subfamily. Monomer. The cofactor is Zn(2+).

The protein resides in the cytoplasm. It carries out the reaction tRNA(Glu) + L-glutamate + ATP = L-glutamyl-tRNA(Glu) + AMP + diphosphate. Its function is as follows. Catalyzes the attachment of glutamate to tRNA(Glu) in a two-step reaction: glutamate is first activated by ATP to form Glu-AMP and then transferred to the acceptor end of tRNA(Glu). This Pseudomonas aeruginosa (strain ATCC 15692 / DSM 22644 / CIP 104116 / JCM 14847 / LMG 12228 / 1C / PRS 101 / PAO1) protein is Glutamate--tRNA ligase.